A 42-amino-acid chain; its full sequence is Photosystem I reaction center subunit IX (42 aa).

The chain crosses the membrane as a helical span at residues 8 to 28 (YLSTAPVLFTVWLSFTASFII).

Belongs to the PsaJ family.

The protein localises to the plastid. Its subcellular location is the chloroplast thylakoid membrane. Its function is as follows. May help in the organization of the PsaE and PsaF subunits. This chain is Photosystem I reaction center subunit IX, found in Rhodomonas salina (Cryptomonas salina).